A 1166-amino-acid polypeptide reads, in one-letter code: Reverse gyrase 2 (1166 aa).

Residues 1 to 40 form an RG N-terminal-type zinc finger; that stretch reads MINVMYKNSCPNCGGDISGDRLLNGLPCEACLPYINGIDD. Residues cysteine 10, cysteine 13, cysteine 28, and cysteine 31 each contribute to the Zn(2+) site. ATP-binding positions include glutamine 92 and 109 to 116; that span reads APTGLGKT. In terms of domain architecture, Helicase ATP-binding spans 96–285; that stretch reads LRRLASNQSF…ALRLLTGFEP (190 aa). The short motif at 190–193 is the DEAD box element; it reads DDAD. Positions 576-1166 are topoisomerase I; it reads FNISTGLLIV…VNPLKSEQNV (591 aa). The Toprim domain occupies 580-743; it reads TGLLIVESPT…NVYRVVYHEI (164 aa). Glutamate 586 is a binding site for Mg(2+). The RG C-terminal-type zinc finger occupies 662 to 689; it reads IKKCLDCNKIFSSASDKCPYCGSANLQS. Residues cysteine 665, cysteine 668, cysteine 679, and cysteine 682 each coordinate Zn(2+). Aspartate 712 contributes to the Mg(2+) binding site. One can recognise a Topo IA-type catalytic domain in the interval 759–1157; the sequence is NTNLVMSQIV…EIFSEISTLV (399 aa). Tyrosine 903 functions as the O-(5'-phospho-DNA)-tyrosine intermediate in the catalytic mechanism.

The protein in the N-terminal section; belongs to the DEAD box helicase family. DDVD subfamily. In the C-terminal section; belongs to the type IA topoisomerase family. In terms of assembly, monomer. Zn(2+) is required as a cofactor. Mg(2+) serves as cofactor.

Its subcellular location is the cytoplasm. The enzyme catalyses ATP + H2O = ADP + phosphate + H(+). Its activity is regulated as follows. At least one of the 2 proteins is inhibited by actinomycin D. Less sensitive to NaCl than TopR1, maximal positive supercoiling is observed with 100 mM NaCl; as NaCl rises higher than 400 mM supercoiling decreases. At 600 mM NaCl relaxes but does not introduce positive supercoils into negatively supercoiled substrate. Functionally, modifies the topological state of DNA by introducing positive supercoils in an ATP-dependent process. A highly processive enzyme, it introduces a large number of positive supercoils directly in a negatively supercoiled substrate. At 75 degrees Celsius introduces more than 23 positive supercoils into pTZ18R DNA (probably 2860 bp), more than TopR1; unlike TopR1 little to no relaxation of the negatively supercoiled substrate is seen in the presence of ATP, in the absence of ATP no activity is seen. At 45 degrees Celsius the enzyme is slower and in vitro individual steps can be detected. It cleaves transiently a single DNA strand and remains covalently bound to the 5' DNA end through a tyrosine residue. May be involved in DNA damage response. May be involved in rewinding the DNA strands in the regions of the chromosome that have opened up to allow transcription or replication. There are 2 genes for this protein in the cell. During exponential growth this is the more highly expressed isoform (about 125 molecules per cell at 80 degrees Celsius, about 117 molecules at 88 degrees Celsius); this isoform is less active at higher temperature. Grows actively at both 80 and 88 degrees Celsius; survives a long exposure at 45 degrees Celsius without DNA replication or cell division occurring. Experiments using whole cell extracts do not distinguish which isoform is present, the results are probably a mixture of the two forms. In Saccharolobus solfataricus (strain ATCC 35092 / DSM 1617 / JCM 11322 / P2) (Sulfolobus solfataricus), this protein is Reverse gyrase 2.